The chain runs to 97 residues: YcgL domain-containing protein Pfl01_1389 (97 aa).

Residues 3–87 (RICSIYQSSK…AEEEYIEHLP (85 aa)) form the YcgL domain.

This Pseudomonas fluorescens (strain Pf0-1) protein is YcgL domain-containing protein Pfl01_1389.